A 268-amino-acid chain; its full sequence is Tryptophan synthase alpha chain (268 aa).

Catalysis depends on proton acceptor residues glutamate 40 and aspartate 51.

It belongs to the TrpA family. Tetramer of two alpha and two beta chains.

The catalysed reaction is (1S,2R)-1-C-(indol-3-yl)glycerol 3-phosphate + L-serine = D-glyceraldehyde 3-phosphate + L-tryptophan + H2O. The protein operates within amino-acid biosynthesis; L-tryptophan biosynthesis; L-tryptophan from chorismate: step 5/5. In terms of biological role, the alpha subunit is responsible for the aldol cleavage of indoleglycerol phosphate to indole and glyceraldehyde 3-phosphate. This chain is Tryptophan synthase alpha chain, found in Geobacillus kaustophilus (strain HTA426).